The sequence spans 489 residues: Protein K15 (489 aa).

The signal sequence occupies residues 1-26 (MKTLIFFWNLWLWALLVCFWCITLVC). The next 11 membrane-spanning stretches (helical) occupy residues 29–49 (TNSI…VSAI), 63–83 (WPSS…WNLS), 89–109 (TYAC…LTLI), 121–141 (HGIL…VHMS), 148–168 (WIFF…FATV), 175–195 (LVSS…VSCC), 200–220 (CTAT…TGII), 237–257 (FLLL…LLAI), 264–284 (IKGH…LYVW), 296–316 (MLHL…VMLL), and 324–344 (ILTM…LLVF).

In terms of assembly, interacts with host LYN; this interaction modulates B-cells signaling. Interacts with host ITSN2.

The protein localises to the host cell membrane. It localises to the host Golgi apparatus. The protein resides in the host trans-Golgi network. Its function is as follows. Plays a crucial role for reactivation of the virus from latency, early viral gene expression and virus production. Modulates host signaling pathways including activation of MAP kinases c-JUN-N-terminal kinase (JNK), ERK2, and NF-kappa-B resulting in the activation of AP-1 and NFAT-dependent gene expression in B-lymphocytes. When expressed in epithelial cells, induces the expression of several inflammatory and angiogenic genes. Also interferes with B-lymphocytes signaling through interaction with host LYN kinase. This is Protein K15 (K15) from Human herpesvirus 8 type P (isolate GK18) (HHV-8).